A 74-amino-acid chain; its full sequence is Small ribosomal subunit protein uS15 (74 aa).

This sequence belongs to the universal ribosomal protein uS15 family. Part of the 30S ribosomal subunit. Forms a bridge to the 50S subunit in the 70S ribosome, contacting the 23S rRNA.

In terms of biological role, one of the primary rRNA binding proteins, it binds directly to 16S rRNA where it helps nucleate assembly of the platform of the 30S subunit by binding and bridging several RNA helices of the 16S rRNA. Forms an intersubunit bridge (bridge B4) with the 23S rRNA of the 50S subunit in the ribosome. The polypeptide is Small ribosomal subunit protein uS15 (Aster yellows witches'-broom phytoplasma (strain AYWB)).